The chain runs to 135 residues: uncharacterized protein (135 aa).

The interval 1 to 36 (MSHAEKPMSDSVNHHHHRTFEVLTAEPVRSRRKPRH) is disordered.

It belongs to the transposase 8 family.

This is an uncharacterized protein from Sinorhizobium fredii (strain NBRC 101917 / NGR234).